Consider the following 347-residue polypeptide: Transcription elongation factor A protein 3 (347 aa).

Positions 5-82 constitute a TFIIS N-terminal domain; sequence EELLRIAKKL…KNWKRLLDSP (78 aa). Over residues 83–100 the composition is skewed to basic and acidic residues; the sequence is RTTKGEREEREKAKKEKG. Positions 83-168 are disordered; the sequence is RTTKGEREER…TTPSSPSTPT (86 aa). S113 is modified (phosphoserine). Over residues 119-131 the composition is skewed to basic and acidic residues; sequence GGGEPKTRRDSVD. Composition is skewed to low complexity over residues 132–142 and 157–168; these read SRSSTTSSPKR and TPTTPSSPSTPT. Residue S139 is modified to Phosphoserine. Residues 186 to 302 enclose the TFIIS central domain; sequence VRDKCVEMLS…EHQMAKTGGT (117 aa). A TFIIS-type zinc finger spans residues 305–345; that stretch reads DLLRCSKCKKKNCTYNQVQTRSADEPMTTFVLCNECGNRWK. Zn(2+)-binding residues include C309, C312, C337, and C340.

It belongs to the TFS-II family. Liver, kidney and heart.

Its subcellular location is the nucleus. Necessary for efficient RNA polymerase II transcription elongation past template-encoded arresting sites. The arresting sites in DNA have the property of trapping a certain fraction of elongating RNA polymerases that pass through, resulting in locked ternary complexes. Cleavage of the nascent transcript by S-II allows the resumption of elongation from the new 3'-terminus. The protein is Transcription elongation factor A protein 3 (Tcea3) of Mus musculus (Mouse).